Consider the following 506-residue polypeptide: DEAD-box ATP-dependent RNA helicase CshA (506 aa).

Positions Gln-2 to Lys-30 match the Q motif motif. In terms of domain architecture, Helicase ATP-binding spans Ile-33–Ile-203. Position 46–53 (Ala-46–Thr-53) interacts with ATP. A DEAD box motif is present at residues Asp-150–Asp-153. Positions Gln-214 to Leu-375 constitute a Helicase C-terminal domain. Residues Glu-436 to Lys-506 form a disordered region. Residues Lys-468–Thr-480 are compositionally biased toward basic residues.

The protein belongs to the DEAD box helicase family. CshA subfamily. In terms of assembly, oligomerizes, may be a member of the RNA degradosome.

It is found in the cytoplasm. It carries out the reaction ATP + H2O = ADP + phosphate + H(+). DEAD-box RNA helicase possibly involved in RNA degradation. Unwinds dsRNA in both 5'- and 3'-directions, has RNA-dependent ATPase activity. This is DEAD-box ATP-dependent RNA helicase CshA from Staphylococcus aureus (strain MRSA252).